Reading from the N-terminus, the 504-residue chain is UDP-N-acetylmuramoylalanine--D-glutamate ligase (504 aa).

ATP is bound at residue 129–135 (GTNGKTT).

This sequence belongs to the MurCDEF family.

The protein resides in the cytoplasm. The enzyme catalyses UDP-N-acetyl-alpha-D-muramoyl-L-alanine + D-glutamate + ATP = UDP-N-acetyl-alpha-D-muramoyl-L-alanyl-D-glutamate + ADP + phosphate + H(+). Its pathway is cell wall biogenesis; peptidoglycan biosynthesis. In terms of biological role, cell wall formation. Catalyzes the addition of glutamate to the nucleotide precursor UDP-N-acetylmuramoyl-L-alanine (UMA). This Burkholderia thailandensis (strain ATCC 700388 / DSM 13276 / CCUG 48851 / CIP 106301 / E264) protein is UDP-N-acetylmuramoylalanine--D-glutamate ligase.